Here is a 201-residue protein sequence, read N- to C-terminus: Protocatechuate 3,4-dioxygenase alpha chain (201 aa).

Arginine 134 lines the 3,4-dihydroxybenzoate pocket.

This sequence belongs to the intradiol ring-cleavage dioxygenase family. As to quaternary structure, the enzyme is an oligomer of 12 copies of the alpha and beta chains. Fe(3+) serves as cofactor.

The catalysed reaction is 3,4-dihydroxybenzoate + O2 = 3-carboxy-cis,cis-muconate + 2 H(+). It functions in the pathway aromatic compound metabolism; beta-ketoadipate pathway; 3-carboxy-cis,cis-muconate from 3,4-dihydroxybenzoate: step 1/1. In terms of biological role, plays an essential role in the utilization of numerous aromatic and hydroaromatic compounds via the beta-ketoadipate pathway. The sequence is that of Protocatechuate 3,4-dioxygenase alpha chain (pcaG) from Pseudomonas putida (Arthrobacter siderocapsulatus).